The following is a 364-amino-acid chain: Histidinol-phosphate aminotransferase (364 aa).

N6-(pyridoxal phosphate)lysine is present on lysine 226.

It belongs to the class-II pyridoxal-phosphate-dependent aminotransferase family. Histidinol-phosphate aminotransferase subfamily. As to quaternary structure, homodimer. It depends on pyridoxal 5'-phosphate as a cofactor.

It carries out the reaction L-histidinol phosphate + 2-oxoglutarate = 3-(imidazol-4-yl)-2-oxopropyl phosphate + L-glutamate. It functions in the pathway amino-acid biosynthesis; L-histidine biosynthesis; L-histidine from 5-phospho-alpha-D-ribose 1-diphosphate: step 7/9. The polypeptide is Histidinol-phosphate aminotransferase (Campylobacter jejuni subsp. jejuni serotype O:2 (strain ATCC 700819 / NCTC 11168)).